We begin with the raw amino-acid sequence, 514 residues long: MVVNYHNEPSIDFTDSKNVESFKEALKKVKGELNQKIPLVINGEEKFTKDTYQSINPANTTEVIAEVSKATQKDVDDAFEAANEAYKSWKRWSHKDRAEFLIRVAAIIRRRKEEISAVMVYEAGKPWDEAVGDAAEGIDFIEYYARSMMELADGKPVLDREGEHNKYFYKPIGTGVTIPPWNFPFAIMAGTTLAPVVAGNTVLLKPAEDTPLTAYKLMEILEEAGLPKGVVNFVPGDPKEIGDYLVDSVHTHFVTFTGSRATGTRIFERAAKVQDGQQFLKRVIAEMGGKDAIVVDKDIDTDLAAESIVSSAFGFSGQKCSACSRAIVHKDVYDEVLEKAVALTKNLTVGNTENNTYMGPVINQKQFDKIKNYIEIGSKEGKLKQGGGTDDATGYFVEPTIIANLKSSDQIMQEEIFGPVVGFVKGKDFEELLEIANDTDYGLTGAVITNNRENWIEAVESYDVGNLYLNRGCTSAVVGYHPFGGFKMSGTDAKTGSPDYLLNFLEQKVVSEMF.

Residues E286 and C320 contribute to the active site.

It belongs to the aldehyde dehydrogenase family. RocA subfamily.

It carries out the reaction L-glutamate 5-semialdehyde + NAD(+) + H2O = L-glutamate + NADH + 2 H(+). The protein operates within amino-acid degradation; L-proline degradation into L-glutamate; L-glutamate from L-proline: step 2/2. This is 1-pyrroline-5-carboxylate dehydrogenase from Staphylococcus saprophyticus subsp. saprophyticus (strain ATCC 15305 / DSM 20229 / NCIMB 8711 / NCTC 7292 / S-41).